A 230-amino-acid polypeptide reads, in one-letter code: Urease accessory protein UreF (230 aa).

It belongs to the UreF family. UreD, UreF and UreG form a complex that acts as a GTP-hydrolysis-dependent molecular chaperone, activating the urease apoprotein by helping to assemble the nickel containing metallocenter of UreC. The UreE protein probably delivers the nickel.

It localises to the cytoplasm. Functionally, required for maturation of urease via the functional incorporation of the urease nickel metallocenter. The polypeptide is Urease accessory protein UreF (Cupriavidus metallidurans (strain ATCC 43123 / DSM 2839 / NBRC 102507 / CH34) (Ralstonia metallidurans)).